The chain runs to 144 residues: Large ribosomal subunit protein uL16 (144 aa).

Residues 1–14 are compositionally biased toward basic residues; sequence MLTPKRVKHRKQHR. The segment at 1-22 is disordered; it reads MLTPKRVKHRKQHRPSLAGKAN.

It belongs to the universal ribosomal protein uL16 family. As to quaternary structure, part of the 50S ribosomal subunit.

Its function is as follows. Binds 23S rRNA and is also seen to make contacts with the A and possibly P site tRNAs. This is Large ribosomal subunit protein uL16 from Syntrophomonas wolfei subsp. wolfei (strain DSM 2245B / Goettingen).